A 249-amino-acid polypeptide reads, in one-letter code: DNA repair protein RecO (249 aa).

This sequence belongs to the RecO family.

Involved in DNA repair and RecF pathway recombination. This chain is DNA repair protein RecO, found in Leptospira biflexa serovar Patoc (strain Patoc 1 / Ames).